The primary structure comprises 273 residues: Flagellin FljK (273 aa).

It belongs to the bacterial flagellin family. In terms of assembly, in C.crescentus, the flagellar filament is composed of multiple flagellins of 29 kDa; 27 kDa and 25 kDa.

The protein localises to the secreted. It localises to the bacterial flagellum. In terms of biological role, flagellin is the subunit protein which polymerizes to form the filaments of bacterial flagella. This is Flagellin FljK (fljK) from Caulobacter vibrioides (strain ATCC 19089 / CIP 103742 / CB 15) (Caulobacter crescentus).